Reading from the N-terminus, the 95-residue chain is Small ribosomal subunit protein bS16 (95 aa).

It belongs to the bacterial ribosomal protein bS16 family.

The sequence is that of Small ribosomal subunit protein bS16 from Streptococcus pneumoniae (strain CGSP14).